The chain runs to 613 residues: Putative two-component response regulator ARR21 (613 aa).

Residues 17–131 form the Response regulatory domain; sequence NVMVVDDDHV…DLTKIYQFAL (115 aa). 4-aspartylphosphate is present on Asp68. Polar residues predominate over residues 178 to 195; the sequence is KSDSRTVNSTNGSCVSTD. Positions 178-223 are disordered; that stretch reads KSDSRTVNSTNGSCVSTDGSRKNRKRKPNGGPSDDGESMSQPAKKK. Positions 221 to 224 match the Nuclear localization signal motif; the sequence is KKKK. The myb-like GARP DNA-binding region spans 224 to 274; the sequence is KIQWTDSLHDLFLQAIRHIGLDKAVPKKILAFMSVPYLTRENVASHLQKYR.

Belongs to the ARR family. Type-B subfamily. Binds the target DNA as a monomer. In terms of processing, two-component system major event consists of a His-to-Asp phosphorelay between a sensor histidine kinase (HK) and a response regulator (RR). In plants, the His-to-Asp phosphorelay involves an additional intermediate named Histidine-containing phosphotransfer protein (HPt). This multistep phosphorelay consists of a His-Asp-His-Asp sequential transfer of a phosphate group between first a His and an Asp of the HK protein, followed by the transfer to a conserved His of the HPt protein and finally the transfer to an Asp in the receiver domain of the RR protein. In terms of tissue distribution, mainly expressed in siliques. Also found in germinating seedlings, stems, flowers and roots, but not in rosette leaves.

It localises to the nucleus. Its function is as follows. Putative transcriptional activator that binds specifically to the DNA sequence 5'-[AG]GATT-3'. Functions as a response regulator involved in His-to-Asp phosphorelay signal transduction system. Phosphorylation of the Asp residue in the receiver domain activates the ability of the protein to promote the transcription of target genes. Could directly activate some type-A response regulators in response to cytokinins. This Arabidopsis thaliana (Mouse-ear cress) protein is Putative two-component response regulator ARR21 (ARR21).